Reading from the N-terminus, the 94-residue chain is Long neurotoxin LNTX37 (94 aa).

The N-terminal stretch at 1 to 21 (MKTLLLTLVVVTIMCLDLGYT) is a signal peptide. Intrachain disulfides connect C24–C43, C36–C64, C49–C53, C68–C79, and C80–C85.

Belongs to the three-finger toxin family. Long-chain subfamily. Type II alpha-neurotoxin sub-subfamily. As to expression, expressed by the venom gland.

The protein resides in the secreted. Its function is as follows. Binds with high affinity to muscular (alpha-1/CHRNA1) and neuronal (alpha-7/CHRNA7) nicotinic acetylcholine receptor (nAChR) and inhibits acetylcholine from binding to the receptor, thereby impairing neuromuscular and neuronal transmission. This is Long neurotoxin LNTX37 from Ophiophagus hannah (King cobra).